The chain runs to 419 residues: MTTQLEQAWELAKQRFAAVGIDVEEALRQLDRLPVSMHCWQGDDVSGFENPEGSLTGGIQATGNYPGKARNASELRADLEQAMRLIPGPKRLNLHAIYLESDTPVSRDQIKPEHFKNWVEWAKANQLGLDFNPSCFSHPLSADGFTLSHADDSIRQFWIDHCKASRRVSAYFGEQLGTPSVMNIWIPDGMKDITVDRLAPRQRLLAALDEVISEKLNPAHHIDAVESKLFGIGAESYTVGSNEFYLGYATSRQTALCLDAGHFHPTEVISDKISAAMLYVPQLLLHVSRPVRWDSDHVVLLDDETQAIASEIVRHDLFDRVHIGLDFFDASINRIAAWVIGTRNMKKALLRALLEPTAELRKLEAAGDYTARLALLEEQKSLPWQAVWEMYCQRHDTPAGSEWLESVRAYEKEILSRRG.

Residues His-262, Asp-294, and Asp-296 each coordinate Mn(2+).

Belongs to the rhamnose isomerase family. As to quaternary structure, homotetramer. Requires Mn(2+) as cofactor.

The protein resides in the cytoplasm. The enzyme catalyses L-rhamnopyranose = L-rhamnulose. It functions in the pathway carbohydrate degradation; L-rhamnose degradation; glycerone phosphate from L-rhamnose: step 1/3. Catalyzes the interconversion of L-rhamnose and L-rhamnulose. The sequence is that of L-rhamnose isomerase from Escherichia coli O9:H4 (strain HS).